The chain runs to 373 residues: Glutamine synthetase (373 aa).

Threonine 2 carries the post-translational modification N-acetylthreonine. The required for glutamine-induced ubiquitination by CRL4(CRBN) and proteasomal degradation stretch occupies residues 2-25 (TTSASSHLNKGIKQVYMSLPQGEK). Residues lysine 11 and lysine 14 each carry the N6-acetyllysine; by EP300 modification. Positions 24-106 (EKVQAMYIWI…VLCEVFKYNR (83 aa)) constitute a GS beta-grasp domain. A Phosphotyrosine modification is found at tyrosine 104. Positions 113–373 (LRHTCKRIMD…TGDEPFQYKN (261 aa)) constitute a GS catalytic domain. Glutamate 134 is a binding site for ATP. Mn(2+) contacts are provided by glutamate 134, glutamate 136, glutamate 196, and glutamate 203. 203-208 (EFQIGP) is an ATP binding site. 246–247 (NW) contributes to the L-glutamate binding site. Histidine 253 serves as a coordination point for Mn(2+). ATP contacts are provided by residues 255 to 257 (NFS), arginine 319, and arginine 324. Residue arginine 319 coordinates L-glutamate. 336–338 (YFE) serves as a coordination point for ADP. Position 338 (glutamate 338) interacts with Mn(2+). L-glutamate is bound at residue arginine 340. Serine 343 is subject to Phosphoserine.

This sequence belongs to the glutamine synthetase family. In terms of assembly, decamer; composed of two pentamers. Interacts with PALMD. Interacts with RHOJ. Interacts with BEST2; this interaction tethers a fraction of GLUL to the membrane, causing a decrease of cytosolic glutamine synthase (GS) activity and inhibits the chloride channel activity of BEST2 by affecting the gating at the aperture in the absence of intracellular glutamate. Mg(2+) is required as a cofactor. Mn(2+) serves as cofactor. In terms of processing, acetylated by EP300/p300; acetylation is stimulated by increased glutamine levels and promotes ubiquitin-mediated proteasomal degradation. Post-translationally, palmitoylated; undergoes autopalmitoylation. Ubiquitinated by ZNRF1. Ubiquitinated by the DCX (DDB1-CUL4-X-box) E3 ubiquitin-protein ligase complex called CRL4(CRBN), leading to proteasomal degradation. As to expression, expressed in endothelial cells.

Its subcellular location is the cytoplasm. It localises to the cytosol. The protein localises to the microsome. The protein resides in the mitochondrion. It is found in the cell membrane. It catalyses the reaction L-glutamate + NH4(+) + ATP = L-glutamine + ADP + phosphate + H(+). It carries out the reaction L-cysteinyl-[protein] + hexadecanoyl-CoA = S-hexadecanoyl-L-cysteinyl-[protein] + CoA. Glutamine synthetase activity is inhibited by methionine sulfoximine (MSO). Glutamine synthetase that catalyzes the ATP-dependent conversion of glutamate and ammonia to glutamine. Its role depends on tissue localization: in the brain, it regulates the levels of toxic ammonia and converts neurotoxic glutamate to harmless glutamine, whereas in the liver, it is one of the enzymes responsible for the removal of ammonia. Plays a key role in ammonium detoxification during erythropoiesis: the glutamine synthetase activity is required to remove ammonium generated by porphobilinogen deaminase (HMBS) during heme biosynthesis to prevent ammonium accumulation and oxidative stress. Essential for proliferation of fetal skin fibroblasts. Independently of its glutamine synthetase activity, required for endothelial cell migration during vascular development: acts by regulating membrane localization and activation of the GTPase RHOJ, possibly by promoting RHOJ palmitoylation. May act as a palmitoyltransferase for RHOJ: able to autopalmitoylate and then transfer the palmitoyl group to RHOJ. Plays a role in ribosomal 40S subunit biogenesis. Through the interaction with BEST2, inhibits BEST2 channel activity by affecting the gating at the aperture in the absence of intracellular L-glutamate, but sensitizes BEST2 to intracellular L-glutamate, which promotes the opening of BEST2 and thus relieves its inhibitory effect on BEST2. The protein is Glutamine synthetase of Homo sapiens (Human).